The primary structure comprises 109 residues: Nucleoid-associated protein NT01EI_1109 (109 aa).

The disordered stretch occupies residues 89–109; it reads KERMASVSSGMQLPPGFKMPF.

It belongs to the YbaB/EbfC family. In terms of assembly, homodimer.

It localises to the cytoplasm. Its subcellular location is the nucleoid. Binds to DNA and alters its conformation. May be involved in regulation of gene expression, nucleoid organization and DNA protection. The protein is Nucleoid-associated protein NT01EI_1109 of Edwardsiella ictaluri (strain 93-146).